A 278-amino-acid chain; its full sequence is Phosphatidylglycerol--prolipoprotein diacylglyceryl transferase (278 aa).

Helical transmembrane passes span 17 to 37 (LAVR…ILLG), 57 to 77 (ALFY…VLFY), 89 to 109 (ILAI…VAIA), and 119 to 139 (LSWL…LGAG). Arginine 140 is an a 1,2-diacyl-sn-glycero-3-phospho-(1'-sn-glycerol) binding site. 3 consecutive transmembrane segments (helical) span residues 174 to 194 (QLYE…LYSA), 200 to 220 (GAVT…CEFF), and 233 to 253 (LGIS…IALL).

It belongs to the Lgt family.

It localises to the cell inner membrane. The catalysed reaction is L-cysteinyl-[prolipoprotein] + a 1,2-diacyl-sn-glycero-3-phospho-(1'-sn-glycerol) = an S-1,2-diacyl-sn-glyceryl-L-cysteinyl-[prolipoprotein] + sn-glycerol 1-phosphate + H(+). The protein operates within protein modification; lipoprotein biosynthesis (diacylglyceryl transfer). Functionally, catalyzes the transfer of the diacylglyceryl group from phosphatidylglycerol to the sulfhydryl group of the N-terminal cysteine of a prolipoprotein, the first step in the formation of mature lipoproteins. The chain is Phosphatidylglycerol--prolipoprotein diacylglyceryl transferase from Nitrosomonas europaea (strain ATCC 19718 / CIP 103999 / KCTC 2705 / NBRC 14298).